The following is a 211-amino-acid chain: ATP phosphoribosyltransferase (211 aa).

This sequence belongs to the ATP phosphoribosyltransferase family. Short subfamily. Heteromultimer composed of HisG and HisZ subunits.

Its subcellular location is the cytoplasm. The enzyme catalyses 1-(5-phospho-beta-D-ribosyl)-ATP + diphosphate = 5-phospho-alpha-D-ribose 1-diphosphate + ATP. It participates in amino-acid biosynthesis; L-histidine biosynthesis; L-histidine from 5-phospho-alpha-D-ribose 1-diphosphate: step 1/9. Functionally, catalyzes the condensation of ATP and 5-phosphoribose 1-diphosphate to form N'-(5'-phosphoribosyl)-ATP (PR-ATP). Has a crucial role in the pathway because the rate of histidine biosynthesis seems to be controlled primarily by regulation of HisG enzymatic activity. This is ATP phosphoribosyltransferase from Bacillus mycoides (strain KBAB4) (Bacillus weihenstephanensis).